Here is an 885-residue protein sequence, read N- to C-terminus: Rho GTPase-activating protein gacFF (885 aa).

The span at T168 to N182 shows a compositional bias: low complexity. The tract at residues T168 to S187 is disordered. Residues L222 to S249 adopt a coiled-coil conformation. The F-box domain maps to S348–F394. Residues S464–K571 enclose the PH domain. Low complexity-rich tracts occupy residues N594 to N622 and L629 to G648. The tract at residues N594–F680 is disordered. Residues V701–K885 enclose the Rho-GAP domain.

Its subcellular location is the cytoplasm. Rho GTPase-activating protein involved in the signal transduction pathway. The chain is Rho GTPase-activating protein gacFF (gacFF) from Dictyostelium discoideum (Social amoeba).